Consider the following 481-residue polypeptide: Aspartyl/glutamyl-tRNA(Asn/Gln) amidotransferase subunit B (481 aa).

Residues 29-50 (SSSKSSHTDPKNTNISPIDLGH) are disordered.

It belongs to the GatB/GatE family. GatB subfamily. In terms of assembly, heterotrimer of A, B and C subunits.

It carries out the reaction L-glutamyl-tRNA(Gln) + L-glutamine + ATP + H2O = L-glutaminyl-tRNA(Gln) + L-glutamate + ADP + phosphate + H(+). It catalyses the reaction L-aspartyl-tRNA(Asn) + L-glutamine + ATP + H2O = L-asparaginyl-tRNA(Asn) + L-glutamate + ADP + phosphate + 2 H(+). Functionally, allows the formation of correctly charged Asn-tRNA(Asn) or Gln-tRNA(Gln) through the transamidation of misacylated Asp-tRNA(Asn) or Glu-tRNA(Gln) in organisms which lack either or both of asparaginyl-tRNA or glutaminyl-tRNA synthetases. The reaction takes place in the presence of glutamine and ATP through an activated phospho-Asp-tRNA(Asn) or phospho-Glu-tRNA(Gln). This Malacoplasma penetrans (strain HF-2) (Mycoplasma penetrans) protein is Aspartyl/glutamyl-tRNA(Asn/Gln) amidotransferase subunit B.